The following is a 248-amino-acid chain: Sulfur carrier protein FdhD (248 aa).

Residue Cys-99 is the Cysteine persulfide intermediate of the active site. 232 to 237 is a Mo-bis(molybdopterin guanine dinucleotide) binding site; it reads FVRGKR.

Belongs to the FdhD family.

Its subcellular location is the cytoplasm. Required for formate dehydrogenase (FDH) activity. Acts as a sulfur carrier protein that transfers sulfur from IscS to the molybdenum cofactor prior to its insertion into FDH. This chain is Sulfur carrier protein FdhD, found in Methanothermobacter thermautotrophicus (strain ATCC 29096 / DSM 1053 / JCM 10044 / NBRC 100330 / Delta H) (Methanobacterium thermoautotrophicum).